Here is a 452-residue protein sequence, read N- to C-terminus: FAD-linked oxidoreductase DDB_G0289697 (452 aa).

In terms of domain architecture, FAD-binding PCMH-type spans 44–212; the sequence is VVNTPLLIVY…TDFTFKLHPV (169 aa). His81 bears the Pros-8alpha-FAD histidine mark.

Belongs to the oxygen-dependent FAD-linked oxidoreductase family. It depends on FAD as a cofactor.

This chain is FAD-linked oxidoreductase DDB_G0289697, found in Dictyostelium discoideum (Social amoeba).